Reading from the N-terminus, the 309-residue chain is Homoserine kinase (309 aa).

An ATP-binding site is contributed by 85 to 95 (PYGLGLGSSGS).

The protein belongs to the GHMP kinase family. Homoserine kinase subfamily.

It is found in the cytoplasm. It catalyses the reaction L-homoserine + ATP = O-phospho-L-homoserine + ADP + H(+). Its pathway is amino-acid biosynthesis; L-threonine biosynthesis; L-threonine from L-aspartate: step 4/5. Its function is as follows. Catalyzes the ATP-dependent phosphorylation of L-homoserine to L-homoserine phosphate. The chain is Homoserine kinase from Thermoplasma volcanium (strain ATCC 51530 / DSM 4299 / JCM 9571 / NBRC 15438 / GSS1).